The chain runs to 350 residues: Quinolinate phosphoribosyltransferase [decarboxylating] 1 (350 aa).

Residues arginine 141, 172-174 (TRK), arginine 196, lysine 206, glutamate 239, aspartate 266, 298-300 (SGN), and 319-321 (SGA) contribute to the substrate site.

This sequence belongs to the NadC/ModD family.

The enzyme catalyses nicotinate beta-D-ribonucleotide + CO2 + diphosphate = quinolinate + 5-phospho-alpha-D-ribose 1-diphosphate + 2 H(+). It participates in alkaloid biosynthesis; nicotine biosynthesis. Its pathway is cofactor biosynthesis; NAD(+) biosynthesis; nicotinate D-ribonucleotide from quinolinate: step 1/1. Involved in the biosynthesis of pyridine alkaloid natural products, leading mainly to the production of anabasine, anatabine, nicotine and nornicotine, effective deterrents against herbivores with antiparasitic and pesticide properties (neurotoxins); nornicotine serves as the precursor in the synthesis of the carcinogen compound N'-nitrosonornicotine (NNN). Involved in the catabolism of quinolinic acid (QA). This Nicotiana glauca (Glaucous tobacco) protein is Quinolinate phosphoribosyltransferase [decarboxylating] 1.